Consider the following 103-residue polypeptide: N(4)-acetylcytidine amidohydrolase (103 aa).

The region spanning 6–101 (ITFFQRFQDD…QTQFYVIEFK (96 aa)) is the ASCH domain. The active-site Proton acceptor is K21. Residue T24 is the Nucleophile of the active site. The active-site Proton donor is the E74.

Belongs to the N(4)-acetylcytidine amidohydrolase family.

It catalyses the reaction N(4)-acetylcytidine + H2O = cytidine + acetate + H(+). The catalysed reaction is N(4)-acetyl-2'-deoxycytidine + H2O = 2'-deoxycytidine + acetate + H(+). The enzyme catalyses N(4)-acetylcytosine + H2O = cytosine + acetate + H(+). Catalyzes the hydrolysis of N(4)-acetylcytidine (ac4C). In Escherichia coli O81 (strain ED1a), this protein is N(4)-acetylcytidine amidohydrolase (yqfB).